Consider the following 202-residue polypeptide: Ras-related protein Rab-2B (202 aa).

31-38 (GDSAVGKS) lines the GTP pocket. An Effector region motif is present at residues 53–61 (SDFTIGVEF). Residues 79–83 (DTAGQ) and 137–140 (NKAD) contribute to the GTP site.

It belongs to the small GTPase superfamily. Rab family. Post-translationally, this sequence lacks the C-terminal cysteine motifs subject to isoprenylation in other Rab proteins.

In Dictyostelium discoideum (Social amoeba), this protein is Ras-related protein Rab-2B (rab2B).